A 594-amino-acid polypeptide reads, in one-letter code: MAKKAADVQKGGGFLIEDVTYDQMYTPEDFTDEHKMIAKTTEDYIEQDVLPHIDDIENHQFEHSVRLLKKAGELGLLGADVPEEYGGLGLDKISSALITEKFSRAGSFSLSYGAHVGIGSLPIVFFGSEEQKKKYLPGLASGEKIAAYALTEPGSGSDALGAKTTAVLNEAGTHYVLTGEKQWITNSAFADVFVVYAKVDGDKFSAFIVEKEFPGVSTGPEEKKMGIKGSSTRTLILDQAEVPKENLLGEIGKGHVIAFNILNIGRYKLAVGTIGASKRVIELSAAYANQRRQFKTPIAGFSLTQEKIGTMASRLYAMESSVYRTVGLFEDNMSQFTAEDLKDGRQIAKSIAEYAIECSLNKVFGSETLDYIVDEGVQIHGGYGFMQEYEVERAYRDSRINRIFEGTNEINRLIVPSTFLKKALKGELPLFEKAQSLQEELMMLMPEEPGSGVLEQEKYIVKQAKKIALFAAGLAAQKYGKAIDREQEILVNVADIVSNVYAMESAVLRTEKAIAAQGAEKAAQKVLYTEIFVQEAFNEIEAHAKESLIAMEEGDSLRMMLSALRKLTRVTPKNVIQKKREAAAGIFEAEKYTV.

E405 (proton acceptor) is an active-site residue.

Belongs to the acyl-CoA dehydrogenase family. Requires FAD as cofactor.

The enzyme catalyses a 2,3-saturated acyl-CoA + A = a 2,3-dehydroacyl-CoA + AH2. The protein operates within lipid metabolism; fatty acid beta-oxidation. Involved in the degradation of long-chain fatty acids. The polypeptide is Probable acyl-CoA dehydrogenase (fadE) (Bacillus subtilis (strain 168)).